The sequence spans 218 residues: 1-Cys peroxiredoxin (218 aa).

The Thioredoxin domain occupies 4-164 (LTIGDTIPDL…VLRVVESLQK (161 aa)). C46 acts as the Cysteine sulfenic acid (-SOH) intermediate in catalysis. The short motif at 194–217 (KEMFPQGFKTADLPSKKEYLRFTN) is the Bipartite nuclear localization signal element.

Belongs to the peroxiredoxin family. Prx6 subfamily.

Its subcellular location is the nucleus. It is found in the cytoplasm. It carries out the reaction a hydroperoxide + [thioredoxin]-dithiol = an alcohol + [thioredoxin]-disulfide + H2O. Functionally, thiol-specific peroxidase that catalyzes the reduction of hydrogen peroxide and organic hydroperoxides to water and alcohols, respectively. Seems to contribute to the inhibition of germination during stress. The chain is 1-Cys peroxiredoxin from Medicago truncatula (Barrel medic).